Consider the following 585-residue polypeptide: Folylpolyglutamate synthase, mitochondrial (585 aa).

Residues 1–39 constitute a mitochondrion transit peptide; it reads MSRARCHALFLAAVSPRGATTRVAVRRGLSAWPVLQEPD. Position 103–106 (103–106) interacts with ATP; sequence GKGS. Positions 127, 198, and 226 each coordinate Mg(2+). Residues R361 and D375 each coordinate ATP. The segment at 477–497 is disordered; it reads EEQVSPDPWSTPGQEQDGPAS. Position 537 is a phosphoserine (S537).

Belongs to the folylpolyglutamate synthase family. In terms of assembly, monomer. The cofactor is a monovalent cation.

It is found in the mitochondrion inner membrane. The protein localises to the mitochondrion matrix. The protein resides in the cytoplasm. The enzyme catalyses (6S)-5,6,7,8-tetrahydrofolyl-(gamma-L-Glu)(n) + L-glutamate + ATP = (6S)-5,6,7,8-tetrahydrofolyl-(gamma-L-Glu)(n+1) + ADP + phosphate + H(+). It participates in cofactor biosynthesis; tetrahydrofolylpolyglutamate biosynthesis. Catalyzes conversion of folates to polyglutamate derivatives allowing concentration of folate compounds in the cell and the intracellular retention of these cofactors, which are important substrates for most of the folate-dependent enzymes that are involved in one-carbon transfer reactions involved in purine, pyrimidine and amino acid synthesis. This is Folylpolyglutamate synthase, mitochondrial (FPGS) from Bos taurus (Bovine).